The primary structure comprises 263 residues: Hatching enzyme 1.2 (263 aa).

An N-terminal signal peptide occupies residues 1–19; that stretch reads MDIRASLSILLLLFGLSQA. Positions 20–64 are cleaved as a propeptide — activation peptide; it reads SPLREFEAIFVSEPETVDITTQILETNKGSSEVLFEGDVVLPKNR. In terms of domain architecture, Peptidase M12A spans 65 to 263; the sequence is NALICEDKSC…ILRINKLYGC (199 aa). Cystine bridges form between Cys-69–Cys-74, Cys-114–Cys-263, and Cys-135–Cys-155. Residue His-163 coordinates Zn(2+). The active site involves Glu-164. Residues His-167 and His-173 each coordinate Zn(2+).

Zn(2+) serves as cofactor. Expressed in cells of the hatching gland.

The protein resides in the secreted. The enzyme catalyses Hydrolysis of the inner layer of fish egg envelope. Also hydrolysis of casein and small molecule substrates such as succinyl-Leu-Leu-Val-Tyr-|-7-(4-methyl)coumarylamide.. Metalloendopeptidase which participates in the breakdown of the egg envelope at the time of hatching. Cleaves the N-terminal regions of the zona pellucia glycoproteins ZP2 and ZP3, where it specifically recognizes the peptide sequences TVQQS-|-DYLIK (major site) and KLMLK-|-APEPF (minor site). In Danio rerio (Zebrafish), this protein is Hatching enzyme 1.2.